A 240-amino-acid polypeptide reads, in one-letter code: Acetoacetyl-CoA reductase (240 aa).

Residues arginine 18–isoleucine 20 and asparagine 82–threonine 86 contribute to the NADP(+) site. Substrate contacts are provided by residues serine 134 and asparagine 141–glutamine 144. Tyrosine 147 acts as the Proton acceptor in catalysis. NADP(+) is bound at residue proline 177–isoleucine 180. Glycine 178–phenylalanine 179 is a binding site for substrate.

This sequence belongs to the short-chain dehydrogenases/reductases (SDR) family.

The catalysed reaction is a (3R)-3-hydroxyacyl-CoA + NADP(+) = a 3-oxoacyl-CoA + NADPH + H(+). It participates in biopolymer metabolism; poly-(R)-3-hydroxybutanoate biosynthesis. In terms of biological role, catalyzes the reduction of acetoacetyl-CoA to (R)-3-hydroxybutyryl-CoA. When expressed in E.coli with Synechocystis PhaA, PhaC and PhaE confers the ability to synthesize up to 12% (w/w) poly(3-hydroxybutyrate) (PHB) depending on the carbon source. This chain is Acetoacetyl-CoA reductase, found in Synechocystis sp. (strain ATCC 27184 / PCC 6803 / Kazusa).